Consider the following 702-residue polypeptide: Putative endo-beta-N-acetylglucosaminidase (702 aa).

The signal sequence occupies residues M1–A23. Cell wall-binding repeat units follow at residues A42–Y63, E65–M84, K86–M105, I124–H145, E147–L166, Q185–Y206, D208–M227, A229–I248, E250–M271, A273–M292, E294–M315, A317–I336, E338–M359, A361–M380, and E382–M403.

It belongs to the glycosyl hydrolase 73 family.

It is found in the secreted. The enzyme catalyses an N(4)-(oligosaccharide-(1-&gt;3)-[oligosaccharide-(1-&gt;6)]-beta-D-Man-(1-&gt;4)-beta-D-GlcNAc-(1-&gt;4)-alpha-D-GlcNAc)-L-asparaginyl-[protein] + H2O = an oligosaccharide-(1-&gt;3)-[oligosaccharide-(1-&gt;6)]-beta-D-Man-(1-&gt;4)-D-GlcNAc + N(4)-(N-acetyl-beta-D-glucosaminyl)-L-asparaginyl-[protein]. Its function is as follows. Plays an important role in cell wall degradation and cell separation. The polypeptide is Putative endo-beta-N-acetylglucosaminidase (lytB) (Streptococcus pneumoniae (strain ATCC BAA-255 / R6)).